Consider the following 338-residue polypeptide: Cytochrome bd ubiquinol oxidase subunit 2 (338 aa).

Transmembrane regions (helical) follow at residues 7–27, 50–70, 75–95, 119–139, 163–183, 196–216, 227–247, 256–276, and 306–326; these read LWFILVAVLFVGFFFLEGFDF, IGPFWDANEVWLLTGAGAIFA, WYATMLSGYYIPFVIVLLALM, VVFFGSLIPPFVLGVLFTTLF, ILGGVTVTLLCFQHGLMFITL, MAQKIMGVVFVAVLAFAALSA, EITIPLAVLIVICFMLAAVFI, FGMTGAGLALTVGMIFISLFP, and IAALTLLPFVIGSQIWSYYVF.

Belongs to the cytochrome ubiquinol oxidase subunit 2 family. In terms of assembly, heterodimer of subunits I and II. The cofactor is heme b. It depends on heme d cis-diol as a cofactor.

The protein localises to the cell membrane. It carries out the reaction 2 a ubiquinol + O2(in) + 4 H(+)(in) = 2 a ubiquinone + 2 H2O(in) + 4 H(+)(out). The sequence is that of Cytochrome bd ubiquinol oxidase subunit 2 (cydB) from Bacillus subtilis (strain 168).